The sequence spans 375 residues: E3 ubiquitin-protein ligase RNF34 (375 aa).

The segment at 56–107 (EGPNIVCKACGLSFSVFRKKHVCCDCKKDFCSVCSVLQENLRRCSTCHLLQE) adopts an FYVE-type zinc-finger fold. The 20-residue stretch at 115–134 (LMRLKVKDLRQYLILRNIPI) folds into the SAP 1 domain. Phosphoserine is present on serine 169. Residues 202-250 (RTLGSGALAQEPSEIASANTEDDEDDDDDDDDDDDDDEENLEDRTPGLT) are disordered. Acidic residues predominate over residues 221–242 (TEDDEDDDDDDDDDDDDDEENL). A phosphoserine mark is found at serine 257 and serine 259. Residues 267 to 281 (VEGMSVRQLKEILAR) enclose the SAP 2 domain. Residues 328 to 363 (CRICMDAVIDCVLLECGHMVTCTKCGKRMSECPICR) form an RING-type zinc finger.

Interacts with CASP8 and CASP10. Interacts with p53/TP53; involved in p53/TP53 ubiquitination. Interacts (via RING-type zinc finger) with MDM2; the interaction stabilizes MDM2. Interacts (via RING-type zinc finger) with PPARGC1A. Interacts with NOD1. Autoubiquitinated (in vitro). Post-translationally, proteolytically cleaved by caspases upon induction of apoptosis by TNF.

It is found in the cell membrane. The protein localises to the endomembrane system. The protein resides in the nucleus. Its subcellular location is the nucleus speckle. It localises to the cytoplasm. It is found in the cytosol. The catalysed reaction is S-ubiquitinyl-[E2 ubiquitin-conjugating enzyme]-L-cysteine + [acceptor protein]-L-lysine = [E2 ubiquitin-conjugating enzyme]-L-cysteine + N(6)-ubiquitinyl-[acceptor protein]-L-lysine.. It functions in the pathway protein modification; protein ubiquitination. Its function is as follows. E3 ubiquitin-protein ligase that regulates several biological processes through the ubiquitin-mediated proteasomal degradation of various target proteins. Ubiquitinates the caspases CASP8 and CASP10, promoting their proteasomal degradation, to negatively regulate cell death downstream of death domain receptors in the extrinsic pathway of apoptosis. May mediate 'Lys-48'-linked polyubiquitination of RIPK1 and its subsequent proteasomal degradation thereby indirectly regulating the tumor necrosis factor-mediated signaling pathway. Negatively regulates p53/TP53 through its direct ubiquitination and targeting to proteasomal degradation. Indirectly, may also negatively regulate p53/TP53 through ubiquitination and degradation of SFN. Mediates PPARGC1A proteasomal degradation probably through ubiquitination thereby indirectly regulating the metabolism of brown fat cells. Possibly involved in innate immunity, through 'Lys-48'-linked polyubiquitination of NOD1 and its subsequent proteasomal degradation. This Bos taurus (Bovine) protein is E3 ubiquitin-protein ligase RNF34 (RNF34).